A 133-amino-acid chain; its full sequence is Small ribosomal subunit protein uS8 (133 aa).

The protein belongs to the universal ribosomal protein uS8 family. As to quaternary structure, part of the 30S ribosomal subunit. Contacts proteins S5 and S12.

Functionally, one of the primary rRNA binding proteins, it binds directly to 16S rRNA central domain where it helps coordinate assembly of the platform of the 30S subunit. This chain is Small ribosomal subunit protein uS8, found in Crocosphaera subtropica (strain ATCC 51142 / BH68) (Cyanothece sp. (strain ATCC 51142)).